The primary structure comprises 102 residues: NADH-quinone oxidoreductase subunit K (102 aa).

Transmembrane regions (helical) follow at residues 5-25 (IAHY…GIFL), 31-51 (IIIL…FVAF), and 66-86 (FILT…VVFF).

It belongs to the complex I subunit 4L family. As to quaternary structure, NDH-1 is composed of 14 different subunits. Subunits NuoA, H, J, K, L, M, N constitute the membrane sector of the complex.

The protein localises to the cell inner membrane. The enzyme catalyses a quinone + NADH + 5 H(+)(in) = a quinol + NAD(+) + 4 H(+)(out). Its function is as follows. NDH-1 shuttles electrons from NADH, via FMN and iron-sulfur (Fe-S) centers, to quinones in the respiratory chain. The immediate electron acceptor for the enzyme in this species is believed to be ubiquinone. Couples the redox reaction to proton translocation (for every two electrons transferred, four hydrogen ions are translocated across the cytoplasmic membrane), and thus conserves the redox energy in a proton gradient. The chain is NADH-quinone oxidoreductase subunit K from Bartonella bacilliformis (strain ATCC 35685 / KC583 / Herrer 020/F12,63).